A 216-amino-acid polypeptide reads, in one-letter code: Flagellin B2 (216 aa).

The propeptide occupies 1 to 12 (MKIKEFMSNKKG). Asn38, Asn72, Asn77, Asn113, Asn172, and Asn208 each carry an N-linked (GlcNAc...) asparagine glycan.

Belongs to the archaeal flagellin family. N-linked glycans consist of the 779 Da trisaccharide beta-ManNAc(Thr)-(1-4)-beta-GlcNAc3NAcA-(1-3)-beta-GlcNAc.

It localises to the archaeal flagellum. Its function is as follows. Flagellin is the subunit protein which polymerizes to form the filaments of archaeal flagella. The chain is Flagellin B2 (flaB2) from Methanococcus voltae.